A 240-amino-acid chain; its full sequence is UDP-2,3-diacylglucosamine hydrolase (240 aa).

Mn(2+) contacts are provided by aspartate 8, histidine 10, aspartate 41, asparagine 79, and histidine 114. 79-80 serves as a coordination point for substrate; that stretch reads NR. Substrate contacts are provided by aspartate 122, serine 160, asparagine 164, lysine 167, and histidine 195. Positions 195 and 197 each coordinate Mn(2+).

This sequence belongs to the LpxH family. Mn(2+) serves as cofactor.

It localises to the cell inner membrane. It catalyses the reaction UDP-2-N,3-O-bis[(3R)-3-hydroxytetradecanoyl]-alpha-D-glucosamine + H2O = 2-N,3-O-bis[(3R)-3-hydroxytetradecanoyl]-alpha-D-glucosaminyl 1-phosphate + UMP + 2 H(+). It functions in the pathway glycolipid biosynthesis; lipid IV(A) biosynthesis; lipid IV(A) from (3R)-3-hydroxytetradecanoyl-[acyl-carrier-protein] and UDP-N-acetyl-alpha-D-glucosamine: step 4/6. Functionally, hydrolyzes the pyrophosphate bond of UDP-2,3-diacylglucosamine to yield 2,3-diacylglucosamine 1-phosphate (lipid X) and UMP by catalyzing the attack of water at the alpha-P atom. Involved in the biosynthesis of lipid A, a phosphorylated glycolipid that anchors the lipopolysaccharide to the outer membrane of the cell. In Escherichia coli (strain SE11), this protein is UDP-2,3-diacylglucosamine hydrolase.